The sequence spans 92 residues: Small ribosomal subunit protein uS19 (92 aa).

Belongs to the universal ribosomal protein uS19 family.

In terms of biological role, protein S19 forms a complex with S13 that binds strongly to the 16S ribosomal RNA. The chain is Small ribosomal subunit protein uS19 from Granulibacter bethesdensis (strain ATCC BAA-1260 / CGDNIH1).